Reading from the N-terminus, the 120-residue chain is NAD(P)H-quinone oxidoreductase subunit 3, chloroplastic (120 aa).

3 helical membrane passes run 9–29, 64–84, and 88–108; these read IFWAFLIISSVIPILAFLISG, MFALVFVVFDVETVFLYPWAM, and VLGVSVFIEALIFVLILIVGL.

This sequence belongs to the complex I subunit 3 family. As to quaternary structure, NDH is composed of at least 16 different subunits, 5 of which are encoded in the nucleus.

The protein resides in the plastid. Its subcellular location is the chloroplast thylakoid membrane. The catalysed reaction is a plastoquinone + NADH + (n+1) H(+)(in) = a plastoquinol + NAD(+) + n H(+)(out). It carries out the reaction a plastoquinone + NADPH + (n+1) H(+)(in) = a plastoquinol + NADP(+) + n H(+)(out). NDH shuttles electrons from NAD(P)H:plastoquinone, via FMN and iron-sulfur (Fe-S) centers, to quinones in the photosynthetic chain and possibly in a chloroplast respiratory chain. The immediate electron acceptor for the enzyme in this species is believed to be plastoquinone. Couples the redox reaction to proton translocation, and thus conserves the redox energy in a proton gradient. The protein is NAD(P)H-quinone oxidoreductase subunit 3, chloroplastic of Populus alba (White poplar).